The chain runs to 338 residues: Cytoskeleton protein RodZ (338 aa).

The Cytoplasmic segment spans residues 1 to 111 (MNTEATHEEN…LGKSRKKRDG (111 aa)). Positions 19 to 71 (LRLAREQLGLSQQVVAERLCLKVSTVRDIEEDKAPADLASTFLRGYIRSYARL) constitute an HTH cro/C1-type domain. Positions 30-49 (QQVVAERLCLKVSTVRDIEE) form a DNA-binding region, H-T-H motif. The helical; Signal-anchor for type II membrane protein transmembrane segment at 112–132 (WLMSFTWLVLFVVVGLTGAWW) threads the bilayer. Residues 133–338 (WQNHKAQQEE…TLNAEQSVTQ (206 aa)) lie on the Periplasmic side of the membrane. 2 stretches are compositionally biased toward polar residues: residues 147-180 (ADQS…QDQA) and 189-214 (GDTQ…SQQP). The interval 147–245 (ADQSSAELSQ…AQSQLPVGQA (99 aa)) is disordered. The segment covering 220 to 239 (SQANTDTAAQQNTTQPAQSQ) has biased composition (low complexity).

This sequence belongs to the RodZ family.

The protein localises to the cell inner membrane. Its function is as follows. Cytoskeletal protein that is involved in cell-shape control through regulation of the length of the long axis. The protein is Cytoskeleton protein RodZ of Cronobacter sakazakii (strain ATCC BAA-894) (Enterobacter sakazakii).